Consider the following 1825-residue polypeptide: Proteasome activator complex subunit 4B (1825 aa).

6 HEAT repeats span residues 458–502, 981–1020, 1162–1200, 1336–1374, 1618–1656, and 1662–1700; these read PEGP…LVDC, NFCC…NHCG, YPLP…QLKR, DAFL…GSKH, PEQI…YNLF, and EQCV…CNFL. The interval 1632–1720 is bromodomain-like (BRDL); it reads AGSSSWHARY…EALCKTRLPK (89 aa).

The protein belongs to the BLM10 family. Homodimer. Interacts with the 20S and 26S proteasomes.

Its subcellular location is the cytoplasm. The protein resides in the cytosol. It is found in the nucleus. It localises to the nucleus speckle. Its function is as follows. Associated component of the proteasome that specifically recognizes acetylated histones and promotes ATP- and ubiquitin-independent degradation of core histones during DNA damage response. Recognizes and binds acetylated histones via its bromodomain-like (BRDL) region and activates the proteasome by opening the gated channel for substrate entry. Binds to the core proteasome via its C-terminus, which occupies the same binding sites as the proteasomal ATPases, opening the closed structure of the proteasome via an active gating mechanism. involved in DNA damage response in somatic cells: binds to acetylated histones and promotes degradation of histones. The chain is Proteasome activator complex subunit 4B (psme4b) from Danio rerio (Zebrafish).